Consider the following 599-residue polypeptide: Sulfite reductase [NADPH] flavoprotein alpha-component (599 aa).

Residues 64–202 (ITIISASQTG…AASEWRARVV (139 aa)) form the Flavodoxin-like domain. FMN-binding positions include 70-75 (SQTGNA), 117-120 (STQG), and 153-162 (LGDSSYEFFC). The FAD-binding FR-type domain occupies 234–448 (DAPLVASLSV…IEHNDNFRLP (215 aa)). FAD-binding positions include Thr-322, Ala-356, 386-389 (RLYS), 404-406 (TVG), Tyr-410, and 419-422 (GGAS). Residues 519–520 (SR), 525–529 (KVYVQ), and Asp-561 each bind NADP(+). Residue Tyr-599 participates in FAD binding.

This sequence belongs to the NADPH-dependent sulphite reductase flavoprotein subunit CysJ family. The protein in the N-terminal section; belongs to the flavodoxin family. In the C-terminal section; belongs to the flavoprotein pyridine nucleotide cytochrome reductase family. Alpha(8)-beta(8). The alpha component is a flavoprotein, the beta component is a hemoprotein. Requires FAD as cofactor. FMN serves as cofactor.

It catalyses the reaction hydrogen sulfide + 3 NADP(+) + 3 H2O = sulfite + 3 NADPH + 4 H(+). It participates in sulfur metabolism; hydrogen sulfide biosynthesis; hydrogen sulfide from sulfite (NADPH route): step 1/1. Its function is as follows. Component of the sulfite reductase complex that catalyzes the 6-electron reduction of sulfite to sulfide. This is one of several activities required for the biosynthesis of L-cysteine from sulfate. The flavoprotein component catalyzes the electron flow from NADPH -&gt; FAD -&gt; FMN to the hemoprotein component. The sequence is that of Sulfite reductase [NADPH] flavoprotein alpha-component from Shigella boydii serotype 4 (strain Sb227).